A 237-amino-acid polypeptide reads, in one-letter code: Undecaprenyl-diphosphatase (237 aa).

7 helical membrane-spanning segments follow: residues 38–58 (QTAV…FDGI), 65–85 (WRII…GVLF), 92–112 (LFSS…ILMF), 126–146 (MSFL…FPGI), 166–186 (ALQY…ILGL), 191–211 (ITIL…YVLS), and 217–237 (GKIW…YLVG).

It belongs to the UppP family.

Its subcellular location is the cell inner membrane. It carries out the reaction di-trans,octa-cis-undecaprenyl diphosphate + H2O = di-trans,octa-cis-undecaprenyl phosphate + phosphate + H(+). Functionally, catalyzes the dephosphorylation of undecaprenyl diphosphate (UPP). Confers resistance to bacitracin. This is Undecaprenyl-diphosphatase from Thermotoga petrophila (strain ATCC BAA-488 / DSM 13995 / JCM 10881 / RKU-1).